The chain runs to 309 residues: Homoserine O-succinyltransferase (309 aa).

Residue Cys142 is the Acyl-thioester intermediate of the active site. Substrate is bound by residues Lys163 and Ser192. The Proton acceptor role is filled by His235. Glu237 is a catalytic residue. Arg249 contributes to the substrate binding site.

The protein belongs to the MetA family.

It is found in the cytoplasm. The catalysed reaction is L-homoserine + succinyl-CoA = O-succinyl-L-homoserine + CoA. It functions in the pathway amino-acid biosynthesis; L-methionine biosynthesis via de novo pathway; O-succinyl-L-homoserine from L-homoserine: step 1/1. Functionally, transfers a succinyl group from succinyl-CoA to L-homoserine, forming succinyl-L-homoserine. This is Homoserine O-succinyltransferase from Serratia proteamaculans (strain 568).